A 303-amino-acid polypeptide reads, in one-letter code: tRNA-cytidine(32) 2-sulfurtransferase (303 aa).

The PP-loop motif signature appears at 49-54 (SGGKDS). Residues Cys124, Cys127, and Cys215 each contribute to the [4Fe-4S] cluster site.

Belongs to the TtcA family. As to quaternary structure, homodimer. Mg(2+) serves as cofactor. Requires [4Fe-4S] cluster as cofactor.

The protein resides in the cytoplasm. It carries out the reaction cytidine(32) in tRNA + S-sulfanyl-L-cysteinyl-[cysteine desulfurase] + AH2 + ATP = 2-thiocytidine(32) in tRNA + L-cysteinyl-[cysteine desulfurase] + A + AMP + diphosphate + H(+). The protein operates within tRNA modification. Catalyzes the ATP-dependent 2-thiolation of cytidine in position 32 of tRNA, to form 2-thiocytidine (s(2)C32). The sulfur atoms are provided by the cysteine/cysteine desulfurase (IscS) system. The chain is tRNA-cytidine(32) 2-sulfurtransferase from Anaeromyxobacter sp. (strain Fw109-5).